A 285-amino-acid polypeptide reads, in one-letter code: Bifunctional protein FolD (285 aa).

NADP(+) contacts are provided by residues 165-167 (GRS) and S190.

It belongs to the tetrahydrofolate dehydrogenase/cyclohydrolase family. In terms of assembly, homodimer.

It catalyses the reaction (6R)-5,10-methylene-5,6,7,8-tetrahydrofolate + NADP(+) = (6R)-5,10-methenyltetrahydrofolate + NADPH. The enzyme catalyses (6R)-5,10-methenyltetrahydrofolate + H2O = (6R)-10-formyltetrahydrofolate + H(+). Its pathway is one-carbon metabolism; tetrahydrofolate interconversion. Catalyzes the oxidation of 5,10-methylenetetrahydrofolate to 5,10-methenyltetrahydrofolate and then the hydrolysis of 5,10-methenyltetrahydrofolate to 10-formyltetrahydrofolate. The sequence is that of Bifunctional protein FolD from Burkholderia ambifaria (strain ATCC BAA-244 / DSM 16087 / CCUG 44356 / LMG 19182 / AMMD) (Burkholderia cepacia (strain AMMD)).